The sequence spans 419 residues: Synaptosomal-associated protein 47 (419 aa).

T-SNARE coiled-coil homology domains lie at 109-171 (AANP…LTEL) and 356-418 (KDWP…MRKL).

It belongs to the SVAP1 family. As to quaternary structure, associates with the BLOC-1 complex. Interacts with BLOC1S6. Forms a complex containing SNAP47, VAMP2 and STX1A.

It is found in the endomembrane system. Its subcellular location is the cytoplasm. The protein localises to the perinuclear region. May play a role in intracellular membrane fusion. The sequence is that of Synaptosomal-associated protein 47 (Snap47) from Rattus norvegicus (Rat).